A 468-amino-acid chain; its full sequence is Uronate isomerase (468 aa).

The protein belongs to the metallo-dependent hydrolases superfamily. Uronate isomerase family.

The enzyme catalyses D-glucuronate = D-fructuronate. It carries out the reaction aldehydo-D-galacturonate = keto-D-tagaturonate. Its pathway is carbohydrate metabolism; pentose and glucuronate interconversion. The chain is Uronate isomerase from Marinomonas sp. (strain MWYL1).